The chain runs to 184 residues: dCTP deaminase (184 aa).

107 to 112 contacts dCTP; the sequence is KSTYAR. Residue Glu133 is the Proton donor/acceptor of the active site. Positions 152, 166, and 176 each coordinate dCTP.

This sequence belongs to the dCTP deaminase family. Homotrimer.

The enzyme catalyses dCTP + H2O + H(+) = dUTP + NH4(+). The protein operates within pyrimidine metabolism; dUMP biosynthesis; dUMP from dCTP (dUTP route): step 1/2. Functionally, catalyzes the deamination of dCTP to dUTP. In Herpetosiphon aurantiacus (strain ATCC 23779 / DSM 785 / 114-95), this protein is dCTP deaminase.